The sequence spans 119 residues: Ribonuclease P protein component (119 aa).

Belongs to the RnpA family. Consists of a catalytic RNA component (M1 or rnpB) and a protein subunit.

The enzyme catalyses Endonucleolytic cleavage of RNA, removing 5'-extranucleotides from tRNA precursor.. Functionally, RNaseP catalyzes the removal of the 5'-leader sequence from pre-tRNA to produce the mature 5'-terminus. It can also cleave other RNA substrates such as 4.5S RNA. The protein component plays an auxiliary but essential role in vivo by binding to the 5'-leader sequence and broadening the substrate specificity of the ribozyme. In Citrobacter koseri (strain ATCC BAA-895 / CDC 4225-83 / SGSC4696), this protein is Ribonuclease P protein component.